The following is a 257-amino-acid chain: Zinc transporter ZupT (257 aa).

8 consecutive transmembrane segments (helical) span residues Leu5–Gly25, Val32–Met52, Gly61–Leu81, Ala109–Val129, Leu137–Ala157, Ile171–Ile191, Leu195–Leu215, and Gly236–Ile256. The Fe(2+) site is built by Asn120 and Glu123. Zn(2+) is bound by residues Glu123 and His148. Asn149, Glu152, and Glu181 together coordinate Fe(2+). A Zn(2+)-binding site is contributed by Glu152.

This sequence belongs to the ZIP transporter (TC 2.A.5) family. ZupT subfamily.

The protein resides in the cell inner membrane. The enzyme catalyses Zn(2+)(in) = Zn(2+)(out). Mediates zinc uptake. May also transport other divalent cations. This is Zinc transporter ZupT from Salmonella agona (strain SL483).